Consider the following 990-residue polypeptide: Presequence protease, mitochondrial (990 aa).

A mitochondrion-targeting transit peptide spans 1–56 (MLRFQRTVPRVAIRRLANVYSEGAVLHGYKVRRAQEIPEMRMAAVELEHEMTGARH). Position 84 (histidine 84) interacts with Zn(2+). The active-site Proton acceptor is glutamate 87. Histidine 88 provides a ligand contact to Zn(2+). Glutamate 160 is a catalytic residue. Glutamate 185 is a Zn(2+) binding site.

It belongs to the peptidase M16 family. PreP subfamily. In terms of assembly, monomer and homodimer; homodimerization is induced by binding of the substrate. The cofactor is Zn(2+).

Its subcellular location is the mitochondrion intermembrane space. The protein localises to the mitochondrion matrix. In terms of biological role, degrades mitochondrial transit peptides after their cleavage in the intermembrane space or in the matrix, and presequence peptides; clearance of these peptides is required to keep the presequence processing machinery running. Preferentially cleaves the N-terminal side of paired basic amino acid residues. Also degrades other unstructured peptides. May function as an ATP-dependent peptidase as opposed to a metalloendopeptidase. The polypeptide is Presequence protease, mitochondrial (CYM1) (Eremothecium gossypii (strain ATCC 10895 / CBS 109.51 / FGSC 9923 / NRRL Y-1056) (Yeast)).